A 388-amino-acid chain; its full sequence is Chorismate synthase (388 aa).

Positions 39 and 45 each coordinate NADP(+). FMN-binding positions include 130 to 132 (RSS), 251 to 252 (NA), Gly296, 311 to 315 (KPIPT), and Arg337.

Belongs to the chorismate synthase family. In terms of assembly, homotetramer. The cofactor is FMNH2.

It catalyses the reaction 5-O-(1-carboxyvinyl)-3-phosphoshikimate = chorismate + phosphate. It functions in the pathway metabolic intermediate biosynthesis; chorismate biosynthesis; chorismate from D-erythrose 4-phosphate and phosphoenolpyruvate: step 7/7. Its function is as follows. Catalyzes the anti-1,4-elimination of the C-3 phosphate and the C-6 proR hydrogen from 5-enolpyruvylshikimate-3-phosphate (EPSP) to yield chorismate, which is the branch point compound that serves as the starting substrate for the three terminal pathways of aromatic amino acid biosynthesis. This reaction introduces a second double bond into the aromatic ring system. The chain is Chorismate synthase from Streptococcus pyogenes serotype M3 (strain SSI-1).